Reading from the N-terminus, the 414-residue chain is Histidine--tRNA ligase (414 aa).

It belongs to the class-II aminoacyl-tRNA synthetase family. Homodimer.

Its subcellular location is the cytoplasm. It catalyses the reaction tRNA(His) + L-histidine + ATP = L-histidyl-tRNA(His) + AMP + diphosphate + H(+). The chain is Histidine--tRNA ligase from Ehrlichia ruminantium (strain Welgevonden).